A 524-amino-acid chain; its full sequence is Solute carrier family 35 member F5 (524 aa).

2 helical membrane-spanning segments follow: residues methionine 69–leucine 89 and phenylalanine 101–tryptophan 121. Residue serine 207 is modified to Phosphoserine. Helical transmembrane passes span isoleucine 244–serine 264, alanine 269–phenylalanine 289, phenylalanine 297–leucine 317, threonine 328–isoleucine 348, methionine 362–leucine 382, valine 396–tryptophan 416, phenylalanine 421–isoleucine 441, and tryptophan 453–cysteine 473. In terms of domain architecture, EamA spans phenylalanine 253–leucine 317.

It belongs to the SLC35F solute transporter family.

Its subcellular location is the membrane. Its function is as follows. Putative solute transporter. This is Solute carrier family 35 member F5 (Slc35f5) from Mus musculus (Mouse).